Consider the following 212-residue polypeptide: Minor capsid protein VP2 (212 aa).

The protein belongs to the norovirus VP2 family. As to quaternary structure, homooligomer. The portal-like structure consists in 12 copies of VP2. Interacts with capsid protein VP1.

The protein resides in the virion. The protein localises to the host cytoplasm. Its function is as follows. Minor structural protein that forms a portal-like structure at a unique three-fold axis of symmetry, following binding to the host receptor. The channel formed by VP2 may allow the delivery of the viral genome through the host endosomal membrane. This is Minor capsid protein VP2 from Norovirus (strain Human/NoV/United States/Norwalk/1968/GI) (Hu/NV/NV/1968/US).